A 620-amino-acid chain; its full sequence is MSFDIAKYPTLALVDSTQELRLLPKESLPKLCDELRRYLLDSVSRSSGHFASGLGTVELTVALHYVYNTPFDQLIWDVGHQAYPHKILTGRRDKIGTIRQKGGLHPFPWRGESEYDVLSVGHSSTSISAGIGIAVAAEKEGKNRRTVCVIGDGAITAGMAFEAMNHAGDIRPDMLVVLNDNEMSISENVGALNNHLAQLLSGKLYSSLREGGKKVFSGVPPIKELLKRTEEHIKGMVVPGTLFEELGFNYIGPVDGHDVLGLITTLKNMRDLKGPQFLHIMTKKGRGYEPAEKDPITFHAVPKFDPSSGCLPKSSGGLPSYSKIFGDWLCETAAKDNKLMAITPAMREGSGMVEFSRKFPDRYFDVAIAEQHAVTFAAGLAIGGYKPIVAIYSTFLQRAYDQVLHDVAIQKLPVLFAIDRAGIVGADGQTHQGAFDLSYLRCIPEMVIMTPSDENECRQMLYTGYHYNDGPSAVRYPRGNAVGVELTPLEKLPIGKGIVKRRGEKLAILNFGTLMPEAAKVAESLNATLVDMRFVKPLDEALILEMAASHEALVTVEENAIMGGAGSGVNEVLMAHRKPVPVLNIGLPDFFIPQGTQEEMRAELGLDATGMEAKIKAWLA.

Thiamine diphosphate-binding positions include histidine 80 and glycine 121–serine 123. Residue aspartate 152 coordinates Mg(2+). Residues glycine 153–alanine 154, asparagine 181, tyrosine 288, and glutamate 370 contribute to the thiamine diphosphate site. Asparagine 181 lines the Mg(2+) pocket.

It belongs to the transketolase family. DXPS subfamily. In terms of assembly, homodimer. Mg(2+) serves as cofactor. The cofactor is thiamine diphosphate.

The enzyme catalyses D-glyceraldehyde 3-phosphate + pyruvate + H(+) = 1-deoxy-D-xylulose 5-phosphate + CO2. The protein operates within metabolic intermediate biosynthesis; 1-deoxy-D-xylulose 5-phosphate biosynthesis; 1-deoxy-D-xylulose 5-phosphate from D-glyceraldehyde 3-phosphate and pyruvate: step 1/1. In terms of biological role, catalyzes the acyloin condensation reaction between C atoms 2 and 3 of pyruvate and glyceraldehyde 3-phosphate to yield 1-deoxy-D-xylulose-5-phosphate (DXP). The chain is 1-deoxy-D-xylulose-5-phosphate synthase from Escherichia coli O7:K1 (strain IAI39 / ExPEC).